Consider the following 815-residue polypeptide: G-type lectin S-receptor-like serine/threonine-protein kinase SD1-1 (815 aa).

The first 22 residues, 1 to 22, serve as a signal peptide directing secretion; that stretch reads MREIHSLFSLSLFLISSSLSVA. The Extracellular segment spans residues 23-438; that stretch reads LDYNVITPKE…FAKIEFKGRE (416 aa). Residues 25-152 enclose the Bulb-type lectin domain; the sequence is YNVITPKEFL…EEAVLWQSFD (128 aa). Asparagine 93, asparagine 249, and asparagine 265 each carry an N-linked (GlcNAc...) asparagine glycan. The EGF-like domain maps to 288 to 326; the sequence is PEDECDYYSICGAYAVCGINSKNTPSCSCLQGFKPKSGR. Disulfide bonds link cysteine 292–cysteine 304 and cysteine 298–cysteine 314. Residues asparagine 329 and asparagine 385 are each glycosylated (N-linked (GlcNAc...) asparagine). The 84-residue stretch at 345–428 folds into the PAN domain; sequence CEKKDAFVKF…FGQDVYIRMG (84 aa). 2 disulfides stabilise this stretch: cysteine 378/cysteine 403 and cysteine 382/cysteine 388. Residues 439–459 traverse the membrane as a helical segment; the sequence is VVGMVVGSVVAIAVVLVVVFA. At 460–815 the chain is on the cytoplasmic side; sequence CFRKKIMKRY…EVSITMLQGR (356 aa). The Protein kinase domain occupies 500-783; the sequence is FSYVNFLGRG…SDSSLPHPTQ (284 aa). Residues 506-514 and lysine 528 contribute to the ATP site; that span reads LGRGGFGPV. Residue serine 534 is modified to Phosphoserine. The caM-binding stretch occupies residues 589–606; sequence RRSTELDWKKRMNIINGV. Aspartate 625 serves as the catalytic Proton acceptor. Serine 642 bears the Phosphoserine mark. Phosphothreonine is present on threonine 659. Residues serine 797 and serine 803 each carry the phosphoserine modification. Threonine 810 carries the post-translational modification Phosphothreonine.

The protein belongs to the protein kinase superfamily. Ser/Thr protein kinase family. As to quaternary structure, interacts with PUB9, PUB13 and PUB14.

It is found in the cell membrane. The catalysed reaction is L-seryl-[protein] + ATP = O-phospho-L-seryl-[protein] + ADP + H(+). It catalyses the reaction L-threonyl-[protein] + ATP = O-phospho-L-threonyl-[protein] + ADP + H(+). This chain is G-type lectin S-receptor-like serine/threonine-protein kinase SD1-1 (SD11), found in Arabidopsis thaliana (Mouse-ear cress).